Consider the following 119-residue polypeptide: Ribosome-binding factor A (119 aa).

It belongs to the RbfA family. Monomer. Binds 30S ribosomal subunits, but not 50S ribosomal subunits or 70S ribosomes.

It localises to the cytoplasm. One of several proteins that assist in the late maturation steps of the functional core of the 30S ribosomal subunit. Associates with free 30S ribosomal subunits (but not with 30S subunits that are part of 70S ribosomes or polysomes). Required for efficient processing of 16S rRNA. May interact with the 5'-terminal helix region of 16S rRNA. This chain is Ribosome-binding factor A, found in Geobacter sp. (strain M21).